Reading from the N-terminus, the 207-residue chain is MPRSKSSHRWLKEHFDDEYVKRAQQEGYRSRAVYKLQEIQERDRLLRQGMTVVDLGAAPGGWTQYAAGLVGKHGRVVASDILPMDPLPGVTIVEGDFREAEVLERLLAVLGEGGADLVMSDMAPNMSGMDAVDQPRAMYLAELAAELARTVLKPGGDFLVKLFQGAEFDEYVRMLRTEYDKVSIRKPKASRPRSREVYAVARGRKVV.

S-adenosyl-L-methionine is bound by residues Gly60, Trp62, Asp80, Asp96, and Asp121. Residue Lys161 is the Proton acceptor of the active site.

The protein belongs to the class I-like SAM-binding methyltransferase superfamily. RNA methyltransferase RlmE family.

It is found in the cytoplasm. It carries out the reaction uridine(2552) in 23S rRNA + S-adenosyl-L-methionine = 2'-O-methyluridine(2552) in 23S rRNA + S-adenosyl-L-homocysteine + H(+). Its function is as follows. Specifically methylates the uridine in position 2552 of 23S rRNA at the 2'-O position of the ribose in the fully assembled 50S ribosomal subunit. The protein is Ribosomal RNA large subunit methyltransferase E of Thioalkalivibrio sulfidiphilus (strain HL-EbGR7).